Consider the following 186-residue polypeptide: Peptidyl-tRNA hydrolase (186 aa).

Tyr14 provides a ligand contact to tRNA. His19 serves as the catalytic Proton acceptor. 3 residues coordinate tRNA: Tyr64, Asn66, and Asn112.

It belongs to the PTH family. As to quaternary structure, monomer.

It is found in the cytoplasm. The catalysed reaction is an N-acyl-L-alpha-aminoacyl-tRNA + H2O = an N-acyl-L-amino acid + a tRNA + H(+). In terms of biological role, hydrolyzes ribosome-free peptidyl-tRNAs (with 1 or more amino acids incorporated), which drop off the ribosome during protein synthesis, or as a result of ribosome stalling. Its function is as follows. Catalyzes the release of premature peptidyl moieties from peptidyl-tRNA molecules trapped in stalled 50S ribosomal subunits, and thus maintains levels of free tRNAs and 50S ribosomes. This chain is Peptidyl-tRNA hydrolase, found in Bacillus cytotoxicus (strain DSM 22905 / CIP 110041 / 391-98 / NVH 391-98).